Reading from the N-terminus, the 175-residue chain is NADH-ubiquinone oxidoreductase chain 6 (175 aa).

5 helical membrane passes run 1 to 21, 25 to 45, 47 to 67, 88 to 108, and 149 to 169; these read MMTYIVFILSIIFVMGFVGFS, SPIYGGLGLIVSGGVGCGIVL, FGGSFLGLMVFLIYLGGMMVV, VVLGTFITGLLMEFLMVYYVL, and YGTWLVIVTGWSLLIGVVVIM.

Belongs to the complex I subunit 6 family. Core subunit of respiratory chain NADH dehydrogenase (Complex I) which is composed of 45 different subunits.

The protein resides in the mitochondrion inner membrane. It catalyses the reaction a ubiquinone + NADH + 5 H(+)(in) = a ubiquinol + NAD(+) + 4 H(+)(out). Core subunit of the mitochondrial membrane respiratory chain NADH dehydrogenase (Complex I) which catalyzes electron transfer from NADH through the respiratory chain, using ubiquinone as an electron acceptor. Essential for the catalytic activity and assembly of complex I. This Ovis aries (Sheep) protein is NADH-ubiquinone oxidoreductase chain 6 (MT-ND6).